A 210-amino-acid chain; its full sequence is Redox-sensing transcriptional repressor Rex (210 aa).

A DNA-binding region (H-T-H motif) is located at residues 17 to 56 (KYHRYLGNLMRNDVDRISSKELSEKIGFTASQIRQDLNCF). 91–96 (GAGNIG) provides a ligand contact to NAD(+).

Belongs to the transcriptional regulatory Rex family. As to quaternary structure, homodimer.

The protein resides in the cytoplasm. Functionally, modulates transcription in response to changes in cellular NADH/NAD(+) redox state. In Clostridium kluyveri (strain ATCC 8527 / DSM 555 / NBRC 12016 / NCIMB 10680 / K1), this protein is Redox-sensing transcriptional repressor Rex.